A 142-amino-acid chain; its full sequence is MQMEEDRFPTTVADYCSEFDIPLKDLKLKCVFCRFYLTEQQLAAFYIKNLKLVWKNRYCFACCTPCLRLTAKFEAENYFQCMCKGEVLEVLTRIPLSSLSVRCFDCLTLLSFAEKIDCIISGQNFYLVRGRWRSYCRNCIEK.

Zinc fingers lie at residues 30-66 (CVFCRFYLTEQQLAAFYIKNLKLVWKNRYCFACCTPC) and 103-139 (CFDCLTLLSFAEKIDCIISGQNFYLVRGRWRSYCRNC).

It belongs to the papillomaviridae E6 protein family. In terms of assembly, forms homodimers. Interacts with ubiquitin-protein ligase UBE3A/E6-AP; this interaction stimulates UBE3A ubiquitin activity. Interacts with host BAK1.

The protein resides in the host cytoplasm. The protein localises to the host nucleus. Its function is as follows. Plays a major role in the induction and maintenance of cellular transformation. E6 associates with host UBE3A/E6-AP ubiquitin-protein ligase and modulates its activity. Protects host keratinocytes from apoptosis by mediating the degradation of host BAK1. May also inhibit host immune response. The protein is Protein E6 of Homo sapiens (Human).